Here is a 545-residue protein sequence, read N- to C-terminus: tRNA-2-methylthio-N(6)-dimethylallyladenosine synthase (545 aa).

The segment at 1-32 is disordered; that stretch reads MSSASPLARCCDEATPSAGPRAAQPPYHGPVT. Residues 58 to 174 form the MTTase N-terminal domain; the sequence is RTYQVRTYGC…LPTLLERARH (117 aa). C67, C103, C137, C211, C215, and C218 together coordinate [4Fe-4S] cluster. In terms of domain architecture, Radical SAM core spans 197-433; the sequence is RESAYAAWVS…IALQEQISLE (237 aa). In terms of domain architecture, TRAM spans 436–504; it reads RALVGQAVEV…PHHLIADAGV (69 aa).

Belongs to the methylthiotransferase family. MiaB subfamily. As to quaternary structure, monomer. [4Fe-4S] cluster serves as cofactor.

The protein resides in the cytoplasm. It catalyses the reaction N(6)-dimethylallyladenosine(37) in tRNA + (sulfur carrier)-SH + AH2 + 2 S-adenosyl-L-methionine = 2-methylsulfanyl-N(6)-dimethylallyladenosine(37) in tRNA + (sulfur carrier)-H + 5'-deoxyadenosine + L-methionine + A + S-adenosyl-L-homocysteine + 2 H(+). Functionally, catalyzes the methylthiolation of N6-(dimethylallyl)adenosine (i(6)A), leading to the formation of 2-methylthio-N6-(dimethylallyl)adenosine (ms(2)i(6)A) at position 37 in tRNAs that read codons beginning with uridine. The sequence is that of tRNA-2-methylthio-N(6)-dimethylallyladenosine synthase from Mycobacterium bovis (strain BCG / Pasteur 1173P2).